A 309-amino-acid polypeptide reads, in one-letter code: Glutaminase (309 aa).

Residues serine 64, asparagine 114, glutamate 160, asparagine 167, tyrosine 191, tyrosine 243, and valine 261 each contribute to the substrate site.

Belongs to the glutaminase family. In terms of assembly, homotetramer.

It carries out the reaction L-glutamine + H2O = L-glutamate + NH4(+). The polypeptide is Glutaminase (Methylorubrum populi (strain ATCC BAA-705 / NCIMB 13946 / BJ001) (Methylobacterium populi)).